We begin with the raw amino-acid sequence, 96 residues long: UPF0235 protein VV1_1522 (96 aa).

Belongs to the UPF0235 family.

The sequence is that of UPF0235 protein VV1_1522 from Vibrio vulnificus (strain CMCP6).